Consider the following 401-residue polypeptide: Nicotinate phosphoribosyltransferase (401 aa).

His221 bears the Phosphohistidine; by autocatalysis mark.

The protein belongs to the NAPRTase family. Transiently phosphorylated on a His residue during the reaction cycle. Phosphorylation strongly increases the affinity for substrates and increases the rate of nicotinate D-ribonucleotide production. Dephosphorylation regenerates the low-affinity form of the enzyme, leading to product release.

It carries out the reaction nicotinate + 5-phospho-alpha-D-ribose 1-diphosphate + ATP + H2O = nicotinate beta-D-ribonucleotide + ADP + phosphate + diphosphate. It functions in the pathway cofactor biosynthesis; NAD(+) biosynthesis; nicotinate D-ribonucleotide from nicotinate: step 1/1. In terms of biological role, catalyzes the synthesis of beta-nicotinate D-ribonucleotide from nicotinate and 5-phospho-D-ribose 1-phosphate at the expense of ATP. The sequence is that of Nicotinate phosphoribosyltransferase from Erwinia tasmaniensis (strain DSM 17950 / CFBP 7177 / CIP 109463 / NCPPB 4357 / Et1/99).